The primary structure comprises 257 residues: UPF0246 protein BAV2675 (257 aa).

The protein belongs to the UPF0246 family.

The polypeptide is UPF0246 protein BAV2675 (Bordetella avium (strain 197N)).